The primary structure comprises 398 residues: MFLKNIFIALAIALLVDATPTTTKRSAGFVALDFSVVKTPKAFPVTNGQEGKTSKRQAVPVTLHNEQVTYAADITVGSNNQKLNVIVDTGSSDLWVPDVNVDCQVTYSDQTADFCKQKGTYDPSGSSASQDLNTPFKIGYGDGSSSQGTLYKDTVGFGGVSIKNQVLADVDSTSIDQGILGVGYKTNEAGGSYDNVPVTLKKQGVIAKNAYSLYLNSPDAATGQIIFGGVDNAKYSGSLIALPVTSDRELRISLGSVEVSGKTINTDNVDVLLDSGTTITYLQQDLADQIIKAFNGKLTQDSNGNSFYEVDCNLSGDVVFNFSKNAKISVPASEFAASLQGDDGQPYDKCQLLFDVNDANILGDNFLRSAYIVYDLDDNEISLAQVKYTSASSISALT.

An N-terminal signal peptide occupies residues 1 to 18; sequence MFLKNIFIALAIALLVDA. A propeptide spans 19 to 56 (activation peptide); sequence TPTTTKRSAGFVALDFSVVKTPKAFPVTNGQEGKTSKR. The region spanning 70-384 is the Peptidase A1 domain; it reads YAADITVGSN…DLDDNEISLA (315 aa). Asp88 is an active-site residue. Pepstatin A is bound at residue 88-90; it reads DTG. Cys103 and Cys115 are joined by a disulfide. Pepstatin A is bound at residue 141-142; the sequence is GD. The Zn(2+) site is built by Asp247 and Asp270. Asp274 is an active-site residue. 274 to 278 contributes to the pepstatin A binding site; the sequence is DSGTT. Cys312 and Cys350 are disulfide-bonded. N-linked (GlcNAc...) asparagine glycosylation is found at Asn313 and Asn321.

The protein belongs to the peptidase A1 family. As to quaternary structure, monomer.

The protein localises to the secreted. It carries out the reaction Preferential cleavage at the carboxyl of hydrophobic amino acids, but fails to cleave 15-Leu-|-Tyr-16, 16-Tyr-|-Leu-17 and 24-Phe-|-Phe-25 of insulin B chain. Activates trypsinogen, and degrades keratin.. Functionally, secreted aspartic peptidases (SAPs) are a group of ten acidic hydrolases considered as key virulence factors. These enzymes supply the fungus with nutrient amino acids as well as are able to degrade the selected host's proteins involved in the immune defense. Induces host inflammatory cytokine production in a proteolytic activity-independent way. Plays a role in tissue damage during superficial infection. Moreover, acts toward human hemoglobin though limited proteolysis to generate a variety of antimicrobial hemocidins, enabling to compete with the other microorganisms of the same physiological niche using the microbicidal peptides generated from the host protein. Plays a key role in defense against host by cleaving histatin-5 (Hst 5), a peptide from human saliva that carries out fungicidal activity. The cleavage rate decreases in an order of SAP2 &gt; SAP9 &gt; SAP3 &gt; SAP7 &gt; SAP4 &gt; SAP1 &gt; SAP8. The first cleavage occurs between residues 'Lys-17' and 'His-18' of Hst 5, giving DSHAKRHHGYKRKFHEK and HHSHRGY peptides. Simultaneously, the DSHAKRHHGYKRK peptide is also formed. Further fragmentation by SAP2 results in FHEK and DSHAKRHHGY products. In Candida albicans (Yeast), this protein is Secreted aspartic protease 2.